The chain runs to 509 residues: MLPTLKKSGRPRDARGRFIRHHERLPVSLADTRGALFVASEMADFIKAGGLGDVAAALPRALRHRYDVRVLIPGYRAVLERAGKVEIVGRVLAHAALPACDIGRIVQSDGLPIYILLSKELFERDGSPYVSTSGSEFEDNAIRFATLSHAAAQIAAGHAGLGWKPRLLHLNDWPCALAAGYVRWSGGTTPCLLTIHNLAYQGLVPYSMAAALGIPAERVAELEFYGQMSFLRGGIVNADHVNTVSVSYAKQITGPAQGCGLDRLLAGRAAKGALTGIVNGIDASWDPRTDEYLDSHFSVNQWQGRQANAAQVRKAFGLRESTGPLFAVVSRLVHQKGLDLICEVAPQIVAAGGQIAVIGGGEPEIERQVAELTRRYPGQVGAFIGFEEGLARRMFAGADFLLMPSRFEPCGLSQMYAQRFGCLPIAHATGGLIDTVDDGVTGFLFQHASVEALRRCLERAFRTFRLPSLLSAMRRAAMLRPSGWDVAGKKYLSLYEHTAATAPALATVS.

Residue Lys47 coordinates ADP-alpha-D-glucose.

The protein belongs to the glycosyltransferase 1 family. Bacterial/plant glycogen synthase subfamily.

It catalyses the reaction [(1-&gt;4)-alpha-D-glucosyl](n) + ADP-alpha-D-glucose = [(1-&gt;4)-alpha-D-glucosyl](n+1) + ADP + H(+). It functions in the pathway glycan biosynthesis; glycogen biosynthesis. Functionally, synthesizes alpha-1,4-glucan chains using ADP-glucose. This is Glycogen synthase from Xanthomonas euvesicatoria pv. vesicatoria (strain 85-10) (Xanthomonas campestris pv. vesicatoria).